A 438-amino-acid chain; its full sequence is Thymidine phosphorylase (438 aa).

It belongs to the thymidine/pyrimidine-nucleoside phosphorylase family. Homodimer.

The catalysed reaction is thymidine + phosphate = 2-deoxy-alpha-D-ribose 1-phosphate + thymine. It participates in pyrimidine metabolism; dTMP biosynthesis via salvage pathway; dTMP from thymine: step 1/2. The enzymes which catalyze the reversible phosphorolysis of pyrimidine nucleosides are involved in the degradation of these compounds and in their utilization as carbon and energy sources, or in the rescue of pyrimidine bases for nucleotide synthesis. This chain is Thymidine phosphorylase, found in Burkholderia lata (strain ATCC 17760 / DSM 23089 / LMG 22485 / NCIMB 9086 / R18194 / 383).